The chain runs to 323 residues: Acetyl-coenzyme A carboxylase carboxyl transferase subunit alpha (323 aa).

Residues 35–296 enclose the CoA carboxyltransferase C-terminal domain; sequence EVLSELDELR…GMTLKKCLDE (262 aa).

The protein belongs to the AccA family. Acetyl-CoA carboxylase is a heterohexamer composed of biotin carboxyl carrier protein (AccB), biotin carboxylase (AccC) and two subunits each of ACCase subunit alpha (AccA) and ACCase subunit beta (AccD).

It localises to the cytoplasm. The enzyme catalyses N(6)-carboxybiotinyl-L-lysyl-[protein] + acetyl-CoA = N(6)-biotinyl-L-lysyl-[protein] + malonyl-CoA. It functions in the pathway lipid metabolism; malonyl-CoA biosynthesis; malonyl-CoA from acetyl-CoA: step 1/1. Its function is as follows. Component of the acetyl coenzyme A carboxylase (ACC) complex. First, biotin carboxylase catalyzes the carboxylation of biotin on its carrier protein (BCCP) and then the CO(2) group is transferred by the carboxyltransferase to acetyl-CoA to form malonyl-CoA. The chain is Acetyl-coenzyme A carboxylase carboxyl transferase subunit alpha from Aquifex aeolicus (strain VF5).